The sequence spans 130 residues: Ribonuclease P protein component 2 (130 aa).

This sequence belongs to the eukaryotic/archaeal RNase P protein component 2 family. In terms of assembly, consists of a catalytic RNA component and at least 4-5 protein subunits.

It is found in the cytoplasm. The catalysed reaction is Endonucleolytic cleavage of RNA, removing 5'-extranucleotides from tRNA precursor.. Its function is as follows. Part of ribonuclease P, a protein complex that generates mature tRNA molecules by cleaving their 5'-ends. The sequence is that of Ribonuclease P protein component 2 from Methanococcus maripaludis (strain C7 / ATCC BAA-1331).